The following is a 122-amino-acid chain: Large ribosomal subunit protein uL14 (122 aa).

Belongs to the universal ribosomal protein uL14 family. Part of the 50S ribosomal subunit. Forms a cluster with proteins L3 and L19. In the 70S ribosome, L14 and L19 interact and together make contacts with the 16S rRNA in bridges B5 and B8.

Functionally, binds to 23S rRNA. Forms part of two intersubunit bridges in the 70S ribosome. This Acidiphilium cryptum (strain JF-5) protein is Large ribosomal subunit protein uL14.